The following is a 157-amino-acid chain: Putative gamma-glutamylcyclotransferase CG2811 (157 aa).

14–17 serves as a coordination point for substrate; that stretch reads YGTL. E89 acts as the Proton acceptor in catalysis.

It belongs to the gamma-glutamylcyclotransferase family.

Putative gamma-glutamylcyclotransferase. The polypeptide is Putative gamma-glutamylcyclotransferase CG2811 (Drosophila melanogaster (Fruit fly)).